Consider the following 419-residue polypeptide: Glutamyl-tRNA reductase (419 aa).

Substrate-binding positions include 49–52 (TCNR), serine 107, 112–114 (EPQ), and glutamine 118. Cysteine 50 (nucleophile) is an active-site residue. 187–192 (GAGETI) is a binding site for NADP(+).

It belongs to the glutamyl-tRNA reductase family. As to quaternary structure, homodimer.

It catalyses the reaction (S)-4-amino-5-oxopentanoate + tRNA(Glu) + NADP(+) = L-glutamyl-tRNA(Glu) + NADPH + H(+). It functions in the pathway porphyrin-containing compound metabolism; protoporphyrin-IX biosynthesis; 5-aminolevulinate from L-glutamyl-tRNA(Glu): step 1/2. Functionally, catalyzes the NADPH-dependent reduction of glutamyl-tRNA(Glu) to glutamate 1-semialdehyde (GSA). The chain is Glutamyl-tRNA reductase from Psychromonas ingrahamii (strain DSM 17664 / CCUG 51855 / 37).